Consider the following 903-residue polypeptide: Zinc finger CCCH domain-containing protein 27 (903 aa).

Positions 1 to 144 (MIKESSSPAL…GRNGAPWAQH (144 aa)) are disordered. Residues 11–24 (DADKIEVPSPKDEN) are compositionally biased toward basic and acidic residues. Acidic residues predominate over residues 33–46 (TDNEDFEISDDDDD). The span at 86–96 (SHGEAQKDFFP) shows a compositional bias: basic and acidic residues. Residues 225-253 (GMPRQRCRDFEERGFCLRGDMCPMEHGLN) form a C3H1-type zinc finger. The disordered stretch occupies residues 390–456 (ASKKLGHGKT…GRQSNRASHK (67 aa)). Over residues 397 to 410 (GKTANATSTSATGN) the composition is skewed to low complexity. Polar residues predominate over residues 432–441 (KDSNGQSNSR). The region spanning 459-531 (RTLYVNGIPL…RFIKLWWANR (73 aa)) is the RRM domain. Disordered stretches follow at residues 545-609 (KSSH…DTKR), 642-720 (KQKG…QTSP), and 826-903 (TNHS…DVSQ). A compositionally biased stretch (polar residues) spans 556–576 (SVPQPSSSNRGKENLQSATPR). Residues 577–587 (ASSGSSAEASG) show a composition bias toward low complexity. Residues 608–649 (KRQESLELLEELRKKQEILAQKRDEFRRQLEKLAKQKGLANS) are a coiled coil. A compositionally biased stretch (low complexity) spans 693-708 (SGELASSSHKSSATSA). Residues 826–886 (TNHSRFQKTS…SMPTATSAKT (61 aa)) are compositionally biased toward polar residues.

The chain is Zinc finger CCCH domain-containing protein 27 from Oryza sativa subsp. japonica (Rice).